The sequence spans 229 residues: Ribosomal RNA large subunit methyltransferase E (229 aa).

The disordered stretch occupies residues 1 to 20 (MSRAGNGGRQRIKTAKGRSA). S-adenosyl-L-methionine-binding residues include G75, W77, D94, D110, and D134. The active-site Proton acceptor is the K174.

The protein belongs to the class I-like SAM-binding methyltransferase superfamily. RNA methyltransferase RlmE family.

The protein resides in the cytoplasm. The catalysed reaction is uridine(2552) in 23S rRNA + S-adenosyl-L-methionine = 2'-O-methyluridine(2552) in 23S rRNA + S-adenosyl-L-homocysteine + H(+). In terms of biological role, specifically methylates the uridine in position 2552 of 23S rRNA at the 2'-O position of the ribose in the fully assembled 50S ribosomal subunit. This is Ribosomal RNA large subunit methyltransferase E from Rhizorhabdus wittichii (strain DSM 6014 / CCUG 31198 / JCM 15750 / NBRC 105917 / EY 4224 / RW1) (Sphingomonas wittichii).